A 338-amino-acid chain; its full sequence is Nicotinate-nucleotide--dimethylbenzimidazole phosphoribosyltransferase (338 aa).

E305 (proton acceptor) is an active-site residue.

This sequence belongs to the CobT family.

The catalysed reaction is 5,6-dimethylbenzimidazole + nicotinate beta-D-ribonucleotide = alpha-ribazole 5'-phosphate + nicotinate + H(+). It participates in nucleoside biosynthesis; alpha-ribazole biosynthesis; alpha-ribazole from 5,6-dimethylbenzimidazole: step 1/2. Functionally, catalyzes the synthesis of alpha-ribazole-5'-phosphate from nicotinate mononucleotide (NAMN) and 5,6-dimethylbenzimidazole (DMB). The polypeptide is Nicotinate-nucleotide--dimethylbenzimidazole phosphoribosyltransferase (Sinorhizobium medicae (strain WSM419) (Ensifer medicae)).